Here is a 198-residue protein sequence, read N- to C-terminus: Ribonuclease HII (198 aa).

Residues 10–198 form the RNase H type-2 domain; it reads QLVAGVDEVG…PVKRALGLAS (189 aa). Positions 16, 17, and 108 each coordinate a divalent metal cation.

This sequence belongs to the RNase HII family. Mn(2+) is required as a cofactor. The cofactor is Mg(2+).

The protein resides in the cytoplasm. It carries out the reaction Endonucleolytic cleavage to 5'-phosphomonoester.. Functionally, endonuclease that specifically degrades the RNA of RNA-DNA hybrids. This is Ribonuclease HII from Citrobacter koseri (strain ATCC BAA-895 / CDC 4225-83 / SGSC4696).